The following is a 537-amino-acid chain: Glucans biosynthesis protein D (537 aa).

The segment at residues 1-30 is a signal peptide (tat-type signal); sequence MLMYRRDFLKSVTAAWVAFGLPNPLGGAFA.

This sequence belongs to the OpgD/OpgG family. Post-translationally, predicted to be exported by the Tat system. The position of the signal peptide cleavage has not been experimentally proven.

The protein resides in the periplasm. It functions in the pathway glycan metabolism; osmoregulated periplasmic glucan (OPG) biosynthesis. In terms of biological role, probably involved in the control of the structural glucose backbone of osmoregulated periplasmic glucans (OPGs). This Xylella fastidiosa (strain M12) protein is Glucans biosynthesis protein D.